A 316-amino-acid chain; its full sequence is uncharacterized protein (316 aa).

The interval alanine 285–glycine 316 is disordered. The segment covering aspartate 289–proline 298 has biased composition (acidic residues).

Its function is as follows. Possibly necessary for replication. This is an uncharacterized protein from Halobacterium salinarum (Halobacterium halobium).